The sequence spans 809 residues: Plasminogen (809 aa).

Positions 1 to 19 are cleaved as a signal peptide; sequence MDHKEVVLLLLLFLKSGLG. Positions 20–98 constitute a PAN domain; that stretch reads DSLDDYVNTQ…RDVVLFEKRI (79 aa). Cystine bridges form between Cys-49/Cys-73, Cys-53/Cys-61, Cys-103/Cys-181, Cys-124/Cys-164, Cys-152/Cys-176, Cys-185/Cys-262, Cys-188/Cys-316, Cys-206/Cys-245, Cys-234/Cys-257, Cys-275/Cys-352, Cys-296/Cys-335, Cys-324/Cys-347, Cys-377/Cys-454, Cys-398/Cys-437, Cys-426/Cys-449, Cys-480/Cys-559, Cys-501/Cys-542, Cys-530/Cys-554, Cys-566/Cys-684, Cys-576/Cys-584, Cys-606/Cys-622, Cys-698/Cys-765, Cys-728/Cys-744, and Cys-755/Cys-783. Kringle domains are found at residues 103-181 and 185-262; these read CKTG…IPEC and CMHC…IPRC. O-linked (GalNAc...) threonine glycosylation is present at Thr-268. Kringle domains lie at 275 to 352, 377 to 454, and 480 to 559; these read CLKG…IPSC, CYRG…LKKC, and CMFG…VPQC. A glycan (N-linked (GlcNAc...) asparagine) is linked at Asn-308. The Peptidase S1 domain occupies 580–807; sequence VVGGCVSIPH…FVTWIEEIMR (228 aa). Position 596 is a phosphoserine (Ser-596). Active-site charge relay system residues include His-621 and Asp-664. The Charge relay system role is filled by Ser-759.

Belongs to the peptidase S1 family. Plasminogen subfamily. As to quaternary structure, interacts with CSPG4 and AMOT. Interacts (via the Kringle domains) with HRG; the interaction tethers PLG to the cell surface and enhances its activation. Interacts (via Kringle 4 domain) with ADA; the interaction stimulates PLG activation when in complex with DPP4. Angiostatin: Interacts with ATP5F1A; the interaction inhibits most of the angiogenic effects of angiostatin. N-linked glycan contains N-acetyllactosamine, sialic acid and is core fucosylated. O-linked glycans consist of Gal-GalNAc disaccharide which is modified with up to 2 sialic acid residues (microheterogeneity). In terms of processing, in the presence of the inhibitor, the activation involves only cleavage after Arg-579, yielding two chains held together by two disulfide bonds. In the absence of the inhibitor, the activation involves additionally the removal of the activation peptide.

Its subcellular location is the secreted. It catalyses the reaction Preferential cleavage: Lys-|-Xaa &gt; Arg-|-Xaa, higher selectivity than trypsin. Converts fibrin into soluble products.. Converted into plasmin by plasminogen activators, both plasminogen and its activator being bound to fibrin. Cannot be activated with streptokinase. Functionally, plasmin dissolves the fibrin of blood clots and acts as a proteolytic factor in a variety of other processes including embryonic development, tissue remodeling, tumor invasion, and inflammation. In ovulation, weakens the walls of the Graafian follicle. It activates the urokinase-type plasminogen activator, collagenases and several complement zymogens, such as C1, C4 and C5. Cleavage of fibronectin and laminin leads to cell detachment and apoptosis. Also cleaves fibrin, thrombospondin and von Willebrand factor. Its role in tissue remodeling and tumor invasion may be modulated by CSPG4. Binds to cells. This chain is Plasminogen (PLG), found in Sus scrofa (Pig).